We begin with the raw amino-acid sequence, 196 residues long: Imidazoleglycerol-phosphate dehydratase (196 aa).

This sequence belongs to the imidazoleglycerol-phosphate dehydratase family.

The protein resides in the cytoplasm. It catalyses the reaction D-erythro-1-(imidazol-4-yl)glycerol 3-phosphate = 3-(imidazol-4-yl)-2-oxopropyl phosphate + H2O. Its pathway is amino-acid biosynthesis; L-histidine biosynthesis; L-histidine from 5-phospho-alpha-D-ribose 1-diphosphate: step 6/9. This chain is Imidazoleglycerol-phosphate dehydratase, found in Moorella thermoacetica (strain ATCC 39073 / JCM 9320).